We begin with the raw amino-acid sequence, 122 residues long: Sperm-egg fusion protein LLCFC1 (122 aa).

An N-terminal signal peptide occupies residues 1-28 (MPPLAPQLCRAVFLVPILLLLQVKPLNG). The tract at residues 27–51 (NGSPGPKDGSQTEKTPSADQNQEQF) is disordered. Over residues 38 to 49 (TEKTPSADQNQE) the composition is skewed to polar residues.

The protein localises to the secreted. Its function is as follows. Sperm protein required for fusion of sperm with the egg membrane during fertilization. This is Sperm-egg fusion protein LLCFC1 from Homo sapiens (Human).